The primary structure comprises 1838 residues: Lysine-specific demethylase 5 (1838 aa).

The segment at 1–150 (MSAKTEADNT…SSNKFDQGKN (150 aa)) is disordered. The span at 15-31 (SGGGGVGSGTSSGGGAS) shows a compositional bias: gly residues. Over residues 45–56 (RNSTGNGTNSGS) the composition is skewed to low complexity. Positions 136 to 145 (HTQPHSSNKF) are enriched in polar residues. Residues 161-202 (CPVFRPTTEEFKNPLAYISKIRSIAEKCGIAKILPPATWSPP) enclose the JmjN domain. The 91-residue stretch at 226–316 (TRVKLNFLDQ…ILHPFEVYTS (91 aa)) folds into the ARID domain. A compositionally biased stretch (low complexity) spans 321-333 (GPTPTSSGSGSTP). Disordered regions lie at residues 321-380 (GPTP…GLSG) and 416-437 (GSPL…KGGE). A Phosphothreonine modification is found at threonine 323. Composition is skewed to polar residues over residues 351–361 (TRQQIAPPNET), 369–380 (FGNSNASCGLSG), and 416–430 (GSPL…TRGA). The segment at 448–498 (KYICHICNRGDVEESMLLCDGCDDSYHTFCLLPPLTSIPKGEWLCPRCVVE) adopts a PHD-type 1 zinc-finger fold. In terms of domain architecture, JmjC spans 591-757 (EYAESSWNLN…MGRECVNHYS (167 aa)). 3 residues coordinate Fe cation: histidine 637, aspartate 640, and histidine 725. Positions 960 to 1049 (VRTRSDHNQE…LRIELQQLDL (90 aa)) form a coiled coil. The PHD-type 2 zinc finger occupies 1293 to 1354 (DMFCLCKSEF…KWLCPSCVRS (62 aa)). The disordered stretch occupies residues 1401–1462 (SSPDVSAAQE…SDADDDDDED (62 aa)). Low complexity predominate over residues 1407 to 1417 (AAQEAIMAQQQ). 2 positions are modified to phosphoserine: serine 1422 and serine 1433. Acidic residues predominate over residues 1453–1462 (SDADDDDDED). Serine 1474 carries the phosphoserine modification. The segment at 1548-1751 (YMQRQRQQHT…QRSQQAAQED (204 aa)) is disordered. 5 stretches are compositionally biased toward low complexity: residues 1576–1595 (NSPN…SNSG), 1624–1650 (GKKG…PGAD), 1658–1667 (ANGGNTNSST), 1674–1683 (SATTTPTPGS), and 1692–1736 (STTA…ATGG). A phosphoserine mark is found at serine 1635 and serine 1640. A PHD-type 3 zinc finger spans residues 1753 to 1808 (EEECRAENCHKPTGREVDWVQCDGGCNEWFHMYCVGLNRSQIKPDDDYICIRCTKT). The segment at 1814–1838 (QGSGHSMSVASTTTPGKQRAVQSAR) is disordered.

Belongs to the JARID1 histone demethylase family. In terms of assembly, interacts with Myc. Part of a complex containing Lid, Myc and Ash2. Requires Fe(2+) as cofactor.

The protein localises to the nucleus. It catalyses the reaction N(6),N(6),N(6)-trimethyl-L-lysyl(4)-[histone H3] + 3 2-oxoglutarate + 3 O2 = L-lysyl(4)-[histone H3] + 3 formaldehyde + 3 succinate + 3 CO2. Its activity is regulated as follows. Inhibited by Myc. Functionally, histone demethylase that specifically demethylates 'Lys-4' of histone H3, thereby playing a central role in histone code. Does not demethylate histone H3 'Lys-9', H3 'Lys-27', H3 'Lys-36', H3 'Lys-79' or H4 'Lys-20'. Specifically demethylates trimethylated H3 'Lys-4'. Required for the correct regulation of homeotic genes during development. Plays a role in the regulation of the circadian rhythm and in maintaining the normal periodicity of the circadian clock. Regulates the expression of clock-controlled genes including tim, per and cry. The protein is Lysine-specific demethylase 5 of Drosophila melanogaster (Fruit fly).